Consider the following 514-residue polypeptide: ATP synthase subunit alpha (514 aa).

An ATP-binding site is contributed by 170 to 177; that stretch reads GDRQTGKT.

The protein belongs to the ATPase alpha/beta chains family. F-type ATPases have 2 components, CF(1) - the catalytic core - and CF(0) - the membrane proton channel. CF(1) has five subunits: alpha(3), beta(3), gamma(1), delta(1), epsilon(1). CF(0) has three main subunits: a(1), b(2) and c(9-12). The alpha and beta chains form an alternating ring which encloses part of the gamma chain. CF(1) is attached to CF(0) by a central stalk formed by the gamma and epsilon chains, while a peripheral stalk is formed by the delta and b chains.

The protein localises to the cell inner membrane. The catalysed reaction is ATP + H2O + 4 H(+)(in) = ADP + phosphate + 5 H(+)(out). In terms of biological role, produces ATP from ADP in the presence of a proton gradient across the membrane. The alpha chain is a regulatory subunit. This chain is ATP synthase subunit alpha, found in Psychrobacter sp. (strain PRwf-1).